We begin with the raw amino-acid sequence, 571 residues long: L-erythrulose 1-kinase (571 aa).

A DhaK domain is found at 7–331 (SPDDFADEAV…WTAPVETPAY (325 aa)). Catalysis depends on His217, which acts as the Tele-hemiaminal-histidine intermediate. The DhaL domain occupies 367 to 567 (RNIVAVLETF…FAMLMKALGE (201 aa)). ATP-binding positions include 396-402 (DGDHGQG), 442-443 (TS), Gly484, Arg539, and 552-554 (DPG).

The enzyme catalyses L-erythrulose + ATP = L-erythrulose 1-phosphate + ADP + H(+). It participates in carbohydrate metabolism; L-threitol degradation. Kinase that has a preference for L-erythrulose, producing L-erythrulose-1P. Involved in the degradation pathway of L-threitol, that allows M.smegmatis to grow on this compound as the sole carbon source. Is also able to phosphorylate D-erythrulose and dihydroxyacetone in vitro. This Mycolicibacterium smegmatis (strain ATCC 700084 / mc(2)155) (Mycobacterium smegmatis) protein is L-erythrulose 1-kinase.